Consider the following 293-residue polypeptide: Ribosomal protein L11 methyltransferase (293 aa).

Residues T145, G166, D188, and N230 each contribute to the S-adenosyl-L-methionine site.

The protein belongs to the methyltransferase superfamily. PrmA family.

It is found in the cytoplasm. It carries out the reaction L-lysyl-[protein] + 3 S-adenosyl-L-methionine = N(6),N(6),N(6)-trimethyl-L-lysyl-[protein] + 3 S-adenosyl-L-homocysteine + 3 H(+). In terms of biological role, methylates ribosomal protein L11. The polypeptide is Ribosomal protein L11 methyltransferase (Salmonella heidelberg (strain SL476)).